Reading from the N-terminus, the 672-residue chain is Transcriptional regulator Kaiso (672 aa).

An interaction with NCOR1 region spans residues 1–103 (MESRKLISAT…RSDLLDELIK (103 aa)). Residues 1 to 136 (MESRKLISAT…SGTAQDGNTE (136 aa)) form a self-association region. Positions 32-94 (CDVTVIVEDR…IYSSKIVRVR (63 aa)) constitute a BTB domain. Residues K151 and K153 each participate in a glycyl lysine isopeptide (Lys-Gly) (interchain with G-Cter in SUMO2) cross-link. T251 is modified (phosphothreonine). Residues 298–573 (LPNHMPSSIN…FMSSHIKSVH (276 aa)) are interaction with CBFA2T3. Residues 325–354 (KANEEEEEEIIDDDDDTISSSPDSAVSNTS) form a disordered region. A compositionally biased stretch (acidic residues) spans 328-341 (EEEEEEIIDDDDDT). Glycyl lysine isopeptide (Lys-Gly) (interchain with G-Cter in SUMO2) cross-links involve residues K390, K407, K414, K449, K465, K474, and K479. Residues 454–672 (EGEARLENEI…EFEFIIPESY (219 aa)) form an interaction with CTNND1 region. Residues 471–480 (MANKRMKVKH) carry the Nuclear localization signal motif. 3 consecutive C2H2-type zinc fingers follow at residues 494–516 (YICIVCKRSYVCLTSLRRHFNIH), 522–544 (YPCRYCEKVFPLAEYRTKHEIHH), and 550–573 (YQCLACGKSFINYQFMSSHIKSVH). A required for DNA-binding region spans residues 514 to 638 (NIHSWEKKYP…TTTSTQNKPM (125 aa)). Glycyl lysine isopeptide (Lys-Gly) (interchain with G-Cter in SUMO2) cross-links involve residues K539, K570, K582, K611, and K618. The disordered stretch occupies residues 616-635 (GYKVDTGKEPPVGTTTSTQN).

Self-associates. Interacts with CTNND2. Interacts with CTNND1, and this interaction inhibits binding to both methylated and non-methylated DNA. Interacts with NCOR1. Interacts with KPNA2/RCH1, which may mediate nuclear import of this protein. Interacts with CBFA2T3. As to expression, expressed in vascular endothelium.

Its subcellular location is the nucleus. The protein resides in the cytoplasm. Transcriptional regulator with bimodal DNA-binding specificity. Binds to methylated CpG dinucleotides in the consensus sequence 5'-CGCG-3' and also binds to the non-methylated consensus sequence 5'-CTGCNA-3' also known as the consensus kaiso binding site (KBS). Recruits the N-CoR repressor complex to promote histone deacetylation and the formation of repressive chromatin structures in target gene promoters. May contribute to the repression of target genes of the Wnt signaling pathway. May also activate transcription of a subset of target genes by the recruitment of CTNND2. Represses expression of MMP7 in conjunction with transcriptional corepressors CBFA2T3, CBFA2T2 and RUNX1T1. The chain is Transcriptional regulator Kaiso (ZBTB33) from Homo sapiens (Human).